Reading from the N-terminus, the 238-residue chain is Ribitol-5-phosphate cytidylyltransferase 2 (238 aa).

Residues 7-10 (LAGG) and 81-87 (GTDRNET) contribute to the CTP site.

This sequence belongs to the IspD/TarI cytidylyltransferase family. TarI subfamily.

It carries out the reaction D-ribitol 5-phosphate + CTP + H(+) = CDP-L-ribitol + diphosphate. It functions in the pathway cell wall biogenesis; poly(ribitol phosphate) teichoic acid biosynthesis. In terms of biological role, catalyzes the transfer of the cytidylyl group of CTP to D-ribitol 5-phosphate. The polypeptide is Ribitol-5-phosphate cytidylyltransferase 2 (Staphylococcus aureus (strain bovine RF122 / ET3-1)).